Here is a 308-residue protein sequence, read N- to C-terminus: E3 ubiquitin-protein ligase SINAT2 (308 aa).

The RING-type zinc-finger motif lies at 60–96; it reads CPVCTNLMYPPIHQCPNGHTLCSNCKLRVQNTCPTCR. The tract at residues 110 to 303 is SBD; it reads VAESLEVPCR…QELKLRVTGR (194 aa). The SIAH-type zinc-finger motif lies at 113 to 173; sequence SLEVPCRYQN…LVVHLKDDHK (61 aa). Positions 118, 125, 137, 141, 148, 155, 167, and 172 each coordinate Zn(2+).

It belongs to the SINA (Seven in absentia) family. In terms of assembly, interacts with RAP2-2. Interacts with SINAT6. Interacts with ATG6 and TRAF1A. Interacts with WAV3. Interacts with FREE1. Interacts with ELC/VPS23A.

The protein localises to the endosome. It is found in the multivesicular body. It localises to the cytoplasmic vesicle. The protein resides in the autophagosome. The catalysed reaction is S-ubiquitinyl-[E2 ubiquitin-conjugating enzyme]-L-cysteine + [acceptor protein]-L-lysine = [E2 ubiquitin-conjugating enzyme]-L-cysteine + N(6)-ubiquitinyl-[acceptor protein]-L-lysine.. The protein operates within protein modification; protein ubiquitination. E3 ubiquitin-protein ligase that mediates ubiquitination and subsequent proteasomal degradation of target proteins. E3 ubiquitin ligases accept ubiquitin from an E2 ubiquitin-conjugating enzyme in the form of a thioester and then directly transfers the ubiquitin to targeted substrates. It probably triggers the ubiquitin-mediated degradation of different substrates. Mediates the proteasomal-dependent degradation of ATG6, a component of the autophagosome complex. Requires TRAF1A/MUSE14 and TRAF1B/MUSE13 to target ATG6 for ubiquitination and subsequent regulation of autophagosome assembly. Modulates directly the ubiquitination and proteasomal-dependent degradation of FREE1, a component of the ESCRT-I complex. Modulates directly the ubiquitination and proteasomal-dependent degradation of ELC/VPS23A, a component of the ESCRT-I complex. This is E3 ubiquitin-protein ligase SINAT2 from Arabidopsis thaliana (Mouse-ear cress).